A 484-amino-acid chain; its full sequence is Bifunctional protein GlmU (484 aa).

A pyrophosphorylase region spans residues 1 to 240 (MSASRPAAVM…RTEVEGVNDR (240 aa)). UDP-N-acetyl-alpha-D-glucosamine contacts are provided by residues 12–15 (LAAG), lysine 26, glutamine 79, and 84–85 (GT). Aspartate 113 contacts Mg(2+). Residues glycine 150, glutamate 165, asparagine 180, and asparagine 238 each contribute to the UDP-N-acetyl-alpha-D-glucosamine site. Asparagine 238 provides a ligand contact to Mg(2+). Residues 241 to 261 (VQLAEARRLLNARLLEQLMRD) form a linker region. The segment at 262 to 484 (GVTVVDPAST…RARARSEEDR (223 aa)) is N-acetyltransferase. UDP-N-acetyl-alpha-D-glucosamine contacts are provided by arginine 343 and lysine 361. Histidine 373 serves as the catalytic Proton acceptor. Tyrosine 376 and asparagine 387 together coordinate UDP-N-acetyl-alpha-D-glucosamine. Acetyl-CoA is bound by residues alanine 390, 396-397 (NY), serine 415, and alanine 433. Residues 457-484 (EGWVERKRPGTPAAQAAERARARSEEDR) are disordered. Basic and acidic residues predominate over residues 474–484 (ERARARSEEDR).

This sequence in the N-terminal section; belongs to the N-acetylglucosamine-1-phosphate uridyltransferase family. It in the C-terminal section; belongs to the transferase hexapeptide repeat family. In terms of assembly, homotrimer. Requires Mg(2+) as cofactor.

Its subcellular location is the cytoplasm. It catalyses the reaction alpha-D-glucosamine 1-phosphate + acetyl-CoA = N-acetyl-alpha-D-glucosamine 1-phosphate + CoA + H(+). The enzyme catalyses N-acetyl-alpha-D-glucosamine 1-phosphate + UTP + H(+) = UDP-N-acetyl-alpha-D-glucosamine + diphosphate. The protein operates within nucleotide-sugar biosynthesis; UDP-N-acetyl-alpha-D-glucosamine biosynthesis; N-acetyl-alpha-D-glucosamine 1-phosphate from alpha-D-glucosamine 6-phosphate (route II): step 2/2. It functions in the pathway nucleotide-sugar biosynthesis; UDP-N-acetyl-alpha-D-glucosamine biosynthesis; UDP-N-acetyl-alpha-D-glucosamine from N-acetyl-alpha-D-glucosamine 1-phosphate: step 1/1. It participates in bacterial outer membrane biogenesis; LPS lipid A biosynthesis. Catalyzes the last two sequential reactions in the de novo biosynthetic pathway for UDP-N-acetylglucosamine (UDP-GlcNAc). The C-terminal domain catalyzes the transfer of acetyl group from acetyl coenzyme A to glucosamine-1-phosphate (GlcN-1-P) to produce N-acetylglucosamine-1-phosphate (GlcNAc-1-P), which is converted into UDP-GlcNAc by the transfer of uridine 5-monophosphate (from uridine 5-triphosphate), a reaction catalyzed by the N-terminal domain. This chain is Bifunctional protein GlmU, found in Thermobifida fusca (strain YX).